A 158-amino-acid chain; its full sequence is Transcription elongation factor GreA (158 aa).

Positions 41–61 (GDLSENAEYHAAKEDQSHNEG) are disordered. Positions 51 to 74 (AAKEDQSHNEGRIAELEDKLARAE) form a coiled coil.

The protein belongs to the GreA/GreB family.

Necessary for efficient RNA polymerase transcription elongation past template-encoded arresting sites. The arresting sites in DNA have the property of trapping a certain fraction of elongating RNA polymerases that pass through, resulting in locked ternary complexes. Cleavage of the nascent transcript by cleavage factors such as GreA or GreB allows the resumption of elongation from the new 3'terminus. GreA releases sequences of 2 to 3 nucleotides. This is Transcription elongation factor GreA from Nitrobacter hamburgensis (strain DSM 10229 / NCIMB 13809 / X14).